Consider the following 452-residue polypeptide: MSFRVKGWSDQFSESFYERATTLLTAALNKGTKHSMIADHITVKELDLGPQPPQLEILEVGDLAPDRFQGLFNLHYSGDASLVLQTKIRANPLSVQKSNVPSFSSRNTMLASRAPLTVPMFLRLSDLKLNGIVVLVFSKQKGITVVFRNDPLESVRVSSSFDSIPAIARFLQREIEVQLVSLFQEELPSIIYKMSRIWFAKSDSNLSFQKIPFTSPNQSHTSLANYNPDLLDGPPDYHESTKVDTHLPIKMGPLDVQTHPNIRSIASLALSRKALLPISSPSIPMSIYRSTPPDTIIQQLTTQSDDISAVSSPATQYSASDYLGSNDTTARPSIFGRSHGTSQFRRRERVKKRHVIKIHEASNKSASSSETFVGSKNVDLTESAFDSIPDTPTKIITNINKLKRNYTITNNWLENLQQKIPSEVDNGKVSGLQYSAFKLLMLQRLMAAKGSF.

An SMP-LTD domain is found at 1 to 196 (MSFRVKGWSD…LPSIIYKMSR (196 aa)).

The protein belongs to the MDM34 family. Component of the ER-mitochondria encounter structure (ERMES) or MDM complex, composed of mmm1, mdm10, mdm12 and mdm34.

The protein localises to the mitochondrion outer membrane. Functionally, component of the ERMES/MDM complex, which serves as a molecular tether to connect the endoplasmic reticulum (ER) and mitochondria. Components of this complex are involved in the control of mitochondrial shape and protein biogenesis, and function in nonvesicular lipid trafficking between the ER and mitochondria. Mdm34 is required for the interaction of the ER-resident membrane protein mmm1 and the outer mitochondrial membrane-resident beta-barrel protein mdm10. This is Mitochondrial distribution and morphology protein 34 from Schizosaccharomyces pombe (strain 972 / ATCC 24843) (Fission yeast).